Consider the following 195-residue polypeptide: Peptidyl-tRNA hydrolase (195 aa).

Tyr14 provides a ligand contact to tRNA. His19 serves as the catalytic Proton acceptor. TRNA is bound by residues Tyr64 and Asn66.

It belongs to the PTH family. Monomer.

It is found in the cytoplasm. It carries out the reaction an N-acyl-L-alpha-aminoacyl-tRNA + H2O = an N-acyl-L-amino acid + a tRNA + H(+). Its function is as follows. Hydrolyzes ribosome-free peptidyl-tRNAs (with 1 or more amino acids incorporated), which drop off the ribosome during protein synthesis, or as a result of ribosome stalling. Catalyzes the release of premature peptidyl moieties from peptidyl-tRNA molecules trapped in stalled 50S ribosomal subunits, and thus maintains levels of free tRNAs and 50S ribosomes. This Desulforudis audaxviator (strain MP104C) protein is Peptidyl-tRNA hydrolase.